The sequence spans 444 residues: ATP-dependent 6-phosphofructokinase 2 (444 aa).

S55 is subject to Phosphoserine. Residues G86, 149–150 (RG), and 174–177 (GDGT) each bind ATP. Mg(2+) is bound at residue D175. Substrate contacts are provided by residues 203-205 (TVD), 248-250 (MGR), E304, and 362-365 (YMIR). D205 acts as the Proton acceptor in catalysis.

This sequence belongs to the phosphofructokinase type A (PFKA) family. PPi-dependent PFK group II subfamily. Atypical ATP-dependent clade 'X' sub-subfamily. As to quaternary structure, homotetramer. Mg(2+) serves as cofactor. In terms of tissue distribution, mostly expressed in roots and stems.

Its subcellular location is the cytoplasm. It catalyses the reaction beta-D-fructose 6-phosphate + ATP = beta-D-fructose 1,6-bisphosphate + ADP + H(+). It participates in carbohydrate degradation; glycolysis; D-glyceraldehyde 3-phosphate and glycerone phosphate from D-glucose: step 3/4. With respect to regulation, allosterically activated by AMP. Its function is as follows. Catalyzes the phosphorylation of D-fructose 6-phosphate to fructose 1,6-bisphosphate by ATP, the first committing step of glycolysis. This chain is ATP-dependent 6-phosphofructokinase 2, found in Arabidopsis thaliana (Mouse-ear cress).